A 364-amino-acid polypeptide reads, in one-letter code: MFKPVVKSRSSRSFCYLAGCLAMVAATLSSTAQAKSEWACPEGFTPKAGLNTDFPSDGKKRAFVVVPPKDSAGGAPVWVPMVGTVEATNWNLNVPRSGNNAKLAEHGYMVISPVRQCAEQDPNLGAGACNGVGKDGWTWNPWNDGRAPDASGDKYKTDAGDDVRFLEAMVRCVGTKWKLDRKRLFLGGISAGGTMTNRALLFDSEFWAGGMPISGEWYSTKDDGSTVPFQETRKMVAAAPAKIWQGRVGPYPLPSKLDPMVVITVWGGEKDLWDCGPPLGLCSDYRPTTQASSNYFSSISNVVHVACSATHGHMWPQVNTDAFNLWALNTMASHPKGSSPKDFKLTAPPEGYSCKIGRFTDHYK.

Residues 1 to 34 form the signal peptide; sequence MFKPVVKSRSSRSFCYLAGCLAMVAATLSSTAQA. Active-site charge relay system residues include S190 and S293.

It belongs to the peptidase S9A family. Monomer.

It localises to the periplasm. The enzyme catalyses nonane-4,6-dione + H2O = pentan-2-one + butanoate + H(+). Catalyzes the hydrolysis of 4,6-nonanedione, a beta-diketone compound. Also mediates hydrolysis of oxidized polyvinyl alcohol (PVA) in the second step in the degradation of polyvinyl alcohol. Not active toward the monoketone structure. The polypeptide is Oxidized polyvinyl alcohol hydrolase (oph) (Sphingopyxis sp. (strain 113P3)).